The following is a 396-amino-acid chain: Tryptophan synthase beta chain (396 aa).

Lys-86 carries the N6-(pyridoxal phosphate)lysine modification.

The protein belongs to the TrpB family. As to quaternary structure, tetramer of two alpha and two beta chains. Pyridoxal 5'-phosphate is required as a cofactor.

It carries out the reaction (1S,2R)-1-C-(indol-3-yl)glycerol 3-phosphate + L-serine = D-glyceraldehyde 3-phosphate + L-tryptophan + H2O. The protein operates within amino-acid biosynthesis; L-tryptophan biosynthesis; L-tryptophan from chorismate: step 5/5. Its function is as follows. The beta subunit is responsible for the synthesis of L-tryptophan from indole and L-serine. In Yersinia enterocolitica serotype O:8 / biotype 1B (strain NCTC 13174 / 8081), this protein is Tryptophan synthase beta chain.